Here is a 404-residue protein sequence, read N- to C-terminus: Cysteine desulfurase IscS (404 aa).

Pyridoxal 5'-phosphate is bound by residues 75–76, asparagine 155, glutamine 183, and 203–205; these read AT and SGH. N6-(pyridoxal phosphate)lysine is present on lysine 206. Threonine 243 contributes to the pyridoxal 5'-phosphate binding site. Residue cysteine 328 is the Cysteine persulfide intermediate of the active site. Residue cysteine 328 coordinates [2Fe-2S] cluster.

Belongs to the class-V pyridoxal-phosphate-dependent aminotransferase family. NifS/IscS subfamily. In terms of assembly, homodimer. Forms a heterotetramer with IscU, interacts with other sulfur acceptors. Pyridoxal 5'-phosphate serves as cofactor.

The protein resides in the cytoplasm. The catalysed reaction is (sulfur carrier)-H + L-cysteine = (sulfur carrier)-SH + L-alanine. It functions in the pathway cofactor biosynthesis; iron-sulfur cluster biosynthesis. In terms of biological role, master enzyme that delivers sulfur to a number of partners involved in Fe-S cluster assembly, tRNA modification or cofactor biosynthesis. Catalyzes the removal of elemental sulfur atoms from cysteine to produce alanine. Functions as a sulfur delivery protein for Fe-S cluster synthesis onto IscU, an Fe-S scaffold assembly protein, as well as other S acceptor proteins. The protein is Cysteine desulfurase IscS of Shewanella sp. (strain MR-4).